Reading from the N-terminus, the 205-residue chain is Lymphotoxin-alpha (205 aa).

The signal sequence occupies residues 1–34 (MTPPERLFLPRVCGTTLHLLLLGLLLVLLPGAQG). A glycan (O-linked (GalNAc...) threonine; partial) is linked at T41. The 143-residue stretch at 63-205 (PAAHLIGDPS…STVFFGAFAL (143 aa)) folds into the THD domain. N96 carries an N-linked (GlcNAc...) asparagine glycan.

The protein belongs to the tumor necrosis factor family. As to quaternary structure, homotrimer, and heterotrimer of either two LTB and one LTA subunits or (less prevalent) two LTA and one LTB subunits. Interacts with TNFRSF14.

It is found in the secreted. It localises to the membrane. Functionally, cytokine that in its homotrimeric form binds to TNFRSF1A/TNFR1, TNFRSF1B/TNFBR and TNFRSF14/HVEM. In its heterotrimeric form with LTB binds to TNFRSF3/LTBR. Lymphotoxin is produced by lymphocytes and is cytotoxic for a wide range of tumor cells in vitro and in vivo. The polypeptide is Lymphotoxin-alpha (LTA) (Homo sapiens (Human)).